Consider the following 295-residue polypeptide: 4-diphosphocytidyl-2-C-methyl-D-erythritol kinase (295 aa).

K18 is an active-site residue. 101 to 111 (PMGGGIGGGSS) contacts ATP. D143 is an active-site residue.

This sequence belongs to the GHMP kinase family. IspE subfamily.

The catalysed reaction is 4-CDP-2-C-methyl-D-erythritol + ATP = 4-CDP-2-C-methyl-D-erythritol 2-phosphate + ADP + H(+). It participates in isoprenoid biosynthesis; isopentenyl diphosphate biosynthesis via DXP pathway; isopentenyl diphosphate from 1-deoxy-D-xylulose 5-phosphate: step 3/6. Functionally, catalyzes the phosphorylation of the position 2 hydroxy group of 4-diphosphocytidyl-2C-methyl-D-erythritol. The chain is 4-diphosphocytidyl-2-C-methyl-D-erythritol kinase from Vibrio cholerae serotype O1 (strain ATCC 39315 / El Tor Inaba N16961).